A 242-amino-acid chain; its full sequence is 7-cyano-7-deazaguanine synthase (242 aa).

12-22 (FSGGQDSTTCL) provides a ligand contact to ATP. Zn(2+) contacts are provided by cysteine 200, cysteine 215, cysteine 218, and cysteine 221.

This sequence belongs to the QueC family. Requires Zn(2+) as cofactor.

It catalyses the reaction 7-carboxy-7-deazaguanine + NH4(+) + ATP = 7-cyano-7-deazaguanine + ADP + phosphate + H2O + H(+). It functions in the pathway purine metabolism; 7-cyano-7-deazaguanine biosynthesis. In terms of biological role, catalyzes the ATP-dependent conversion of 7-carboxy-7-deazaguanine (CDG) to 7-cyano-7-deazaguanine (preQ(0)). The sequence is that of 7-cyano-7-deazaguanine synthase from Nitratidesulfovibrio vulgaris (strain ATCC 29579 / DSM 644 / CCUG 34227 / NCIMB 8303 / VKM B-1760 / Hildenborough) (Desulfovibrio vulgaris).